The primary structure comprises 179 residues: ATP synthase subunit b, chloroplastic (179 aa).

Residues 28–46 (LLNILALVAILVYTGKDFL) traverse the membrane as a helical segment.

The protein belongs to the ATPase B chain family. In terms of assembly, F-type ATPases have 2 components, F(1) - the catalytic core - and F(0) - the membrane proton channel. F(1) has five subunits: alpha(3), beta(3), gamma(1), delta(1), epsilon(1). F(0) has four main subunits: a(1), b(1), b'(1) and c(10-14). The alpha and beta chains form an alternating ring which encloses part of the gamma chain. F(1) is attached to F(0) by a central stalk formed by the gamma and epsilon chains, while a peripheral stalk is formed by the delta, b and b' chains.

The protein resides in the plastid. The protein localises to the chloroplast thylakoid membrane. Its function is as follows. F(1)F(0) ATP synthase produces ATP from ADP in the presence of a proton or sodium gradient. F-type ATPases consist of two structural domains, F(1) containing the extramembraneous catalytic core and F(0) containing the membrane proton channel, linked together by a central stalk and a peripheral stalk. During catalysis, ATP synthesis in the catalytic domain of F(1) is coupled via a rotary mechanism of the central stalk subunits to proton translocation. Functionally, component of the F(0) channel, it forms part of the peripheral stalk, linking F(1) to F(0). In Thalassiosira pseudonana (Marine diatom), this protein is ATP synthase subunit b, chloroplastic.